The chain runs to 92 residues: Transcription factor S4 (92 aa).

The ZR-N stretch occupies residues 1–31; the sequence is MRFCPKCGSFLKVKGNKMVCSKCGYSDHDVE. Residues Cys-4, Cys-7, Cys-20, and Cys-23 each coordinate Zn(2+). Residues 32–56 form a flexible linker region; the sequence is KVILKENVAHENDKTIIADGETIEG. The tract at residues 55 to 92 is ZR-C; that stretch reads EGRVAISLCPRCGSVRAILLNKKKRLYRCMTCNFVYNI. Zn(2+) contacts are provided by Cys-63 and Cys-66. Residues Lys-76, Lys-77, and Lys-78 contribute to the active site. Residues Cys-83 and Cys-86 each coordinate Zn(2+).

Belongs to the archaeal RpoM/eukaryotic RPA12/RPB9/RPC11 RNA polymerase family. As to quaternary structure, interacts with RNA polymerase. Zn(2+) is required as a cofactor.

In terms of biological role, a potent inhibitor of RNA polymerase (RNAP) probably involved in viral defense. Destabilizes the transcription pre-initiation complex of TBP, TFB, DNA and RNAP, inhibits abortive transcription initiation, productive initiation and transcription elongation. Increases the RNAP KM for NTPs about 50-fold. Overexpression of TFS1-tip4 (TFS1 with the active tip of this protein, phenocopies this protein) in S.acidocaldarius MW001 leads to severe growth inhibition. When bound to RNAP induces conformational changes that widen the DNA-binding channel, probably destabilizing the interaction of DNA with RNAP. The sequence is that of Transcription factor S4 from Saccharolobus solfataricus (strain ATCC 35092 / DSM 1617 / JCM 11322 / P2) (Sulfolobus solfataricus).